We begin with the raw amino-acid sequence, 120 residues long: Large ribosomal subunit protein eL18 (120 aa).

The protein belongs to the eukaryotic ribosomal protein eL18 family.

This is Large ribosomal subunit protein eL18 from Pyrococcus abyssi (strain GE5 / Orsay).